Consider the following 364-residue polypeptide: Dual-specificity RNA methyltransferase RlmN (364 aa).

The active-site Proton acceptor is the glutamate 91. Positions 102–337 (GTLRITQCLS…AIIRKSKGQD (236 aa)) constitute a Radical SAM core domain. A disulfide bridge links cysteine 109 with cysteine 342. 3 residues coordinate [4Fe-4S] cluster: cysteine 116, cysteine 120, and cysteine 123. S-adenosyl-L-methionine contacts are provided by residues 169 to 170 (GE), serine 201, 223 to 225 (SLH), and asparagine 299. The active-site S-methylcysteine intermediate is cysteine 342.

Belongs to the radical SAM superfamily. RlmN family. Requires [4Fe-4S] cluster as cofactor.

The protein localises to the cytoplasm. It catalyses the reaction adenosine(2503) in 23S rRNA + 2 reduced [2Fe-2S]-[ferredoxin] + 2 S-adenosyl-L-methionine = 2-methyladenosine(2503) in 23S rRNA + 5'-deoxyadenosine + L-methionine + 2 oxidized [2Fe-2S]-[ferredoxin] + S-adenosyl-L-homocysteine. It carries out the reaction adenosine(37) in tRNA + 2 reduced [2Fe-2S]-[ferredoxin] + 2 S-adenosyl-L-methionine = 2-methyladenosine(37) in tRNA + 5'-deoxyadenosine + L-methionine + 2 oxidized [2Fe-2S]-[ferredoxin] + S-adenosyl-L-homocysteine. In terms of biological role, specifically methylates position 2 of adenine 2503 in 23S rRNA and position 2 of adenine 37 in tRNAs. m2A2503 modification seems to play a crucial role in the proofreading step occurring at the peptidyl transferase center and thus would serve to optimize ribosomal fidelity. This Nitratidesulfovibrio vulgaris (strain ATCC 29579 / DSM 644 / CCUG 34227 / NCIMB 8303 / VKM B-1760 / Hildenborough) (Desulfovibrio vulgaris) protein is Dual-specificity RNA methyltransferase RlmN.